A 434-amino-acid polypeptide reads, in one-letter code: 3-phosphoshikimate 1-carboxyvinyltransferase (434 aa).

3-phosphoshikimate contacts are provided by lysine 22, serine 23, and arginine 27. Lysine 22 serves as a coordination point for phosphoenolpyruvate. The phosphoenolpyruvate site is built by glycine 94 and arginine 122. 4 residues coordinate 3-phosphoshikimate: serine 167, glutamine 169, aspartate 314, and lysine 341. Position 169 (glutamine 169) interacts with phosphoenolpyruvate. The active-site Proton acceptor is aspartate 314. Residues arginine 345 and arginine 391 each coordinate phosphoenolpyruvate.

The protein belongs to the EPSP synthase family. Monomer.

It localises to the cytoplasm. It carries out the reaction 3-phosphoshikimate + phosphoenolpyruvate = 5-O-(1-carboxyvinyl)-3-phosphoshikimate + phosphate. It functions in the pathway metabolic intermediate biosynthesis; chorismate biosynthesis; chorismate from D-erythrose 4-phosphate and phosphoenolpyruvate: step 6/7. Functionally, catalyzes the transfer of the enolpyruvyl moiety of phosphoenolpyruvate (PEP) to the 5-hydroxyl of shikimate-3-phosphate (S3P) to produce enolpyruvyl shikimate-3-phosphate and inorganic phosphate. The sequence is that of 3-phosphoshikimate 1-carboxyvinyltransferase from Leuconostoc mesenteroides subsp. mesenteroides (strain ATCC 8293 / DSM 20343 / BCRC 11652 / CCM 1803 / JCM 6124 / NCDO 523 / NBRC 100496 / NCIMB 8023 / NCTC 12954 / NRRL B-1118 / 37Y).